Consider the following 386-residue polypeptide: Myosin light chain kinase family member 4 (386 aa).

Position 100 is a phosphoserine (Ser100). Positions 107 to 361 constitute a Protein kinase domain; it reads VSKSEILGGG…ASEALKHPWL (255 aa). Residues 113-121 and Lys136 contribute to the ATP site; that span reads LGGGRFGQV. The Proton acceptor role is filled by Asp227.

The protein belongs to the protein kinase superfamily. CAMK Ser/Thr protein kinase family.

The enzyme catalyses L-seryl-[protein] + ATP = O-phospho-L-seryl-[protein] + ADP + H(+). The catalysed reaction is L-threonyl-[protein] + ATP = O-phospho-L-threonyl-[protein] + ADP + H(+). The protein is Myosin light chain kinase family member 4 (Mylk4) of Mus musculus (Mouse).